A 261-amino-acid chain; its full sequence is Homeobox-leucine zipper protein HOX24 (261 aa).

2 disordered regions span residues 42 to 67 (AAAAGRGGGDGDGGGGGGGGGERKRR) and 160 to 188 (KLNERQDQSGSCDGGGAEGDDDDKRNSVM). A compositionally biased stretch (gly residues) spans 46–61 (GRGGGDGDGGGGGGGG). Residues 61–121 (GGERKRRFTE…NKRARWRSKQ (61 aa)) constitute a DNA-binding region (homeobox). Residues 120–164 (KQIEHDYAALRAQYDALHARVESLRQEKLALADQVDELRGKLNER) form a leucine-zipper region.

This sequence belongs to the HD-ZIP homeobox family. Class I subfamily. In terms of tissue distribution, expressed in roots and panicles.

The protein localises to the nucleus. Probable transcription factor. In Oryza sativa subsp. japonica (Rice), this protein is Homeobox-leucine zipper protein HOX24 (HOX24).